A 187-amino-acid chain; its full sequence is Biogenesis of lysosome-related organelles complex 1 subunit 5 (187 aa).

Residues 1-26 are disordered; that stretch reads MSGGGTETPVGCEAAPGGGSKKRDSL. Ser-2 is modified (N-acetylserine). Residues 154–186 adopt a coiled-coil conformation; the sequence is NKRAEVDEEHRKAMERLKEQYAEMEKDLAKFST.

The protein belongs to the BLOC1S5 family. In terms of assembly, interacts with BLOC1S4, DTNBP1/BLOC1S7 and PI4K2A. Component of the biogenesis of lysosome-related organelles complex 1 (BLOC-1) composed of BLOC1S1, BLOC1S2, BLOC1S3, BLOC1S4, BLOC1S5, BLOC1S6, DTNBP1/BLOC1S7 and SNAPIN/BLOC1S8. Octamer composed of one copy each BLOC1S1, BLOC1S2, BLOC1S3, BLOC1S4, BLOC1S5, BLOC1S6, DTNBP1/BLOC1S7 and SNAPIN/BLOC1S8. The BLOC-1 complex associates with the AP-3 protein complex and membrane protein cargos. Interacts with BLOC1S6.

In terms of biological role, component of the BLOC-1 complex, a complex that is required for normal biogenesis of lysosome-related organelles (LRO), such as platelet dense granules and melanosomes. In concert with the AP-3 complex, the BLOC-1 complex is required to target membrane protein cargos into vesicles assembled at cell bodies for delivery into neurites and nerve terminals. The BLOC-1 complex, in association with SNARE proteins, is also proposed to be involved in neurite extension. Plays a role in intracellular vesicle trafficking. This Homo sapiens (Human) protein is Biogenesis of lysosome-related organelles complex 1 subunit 5.